The chain runs to 323 residues: Acetyl-coenzyme A carboxylase carboxyl transferase subunit alpha (323 aa).

Positions 39-293 (RLAGKSQQLT…KRSLAESLRQ (255 aa)) constitute a CoA carboxyltransferase C-terminal domain.

It belongs to the AccA family. Acetyl-CoA carboxylase is a heterohexamer composed of biotin carboxyl carrier protein (AccB), biotin carboxylase (AccC) and two subunits each of ACCase subunit alpha (AccA) and ACCase subunit beta (AccD).

It localises to the cytoplasm. The enzyme catalyses N(6)-carboxybiotinyl-L-lysyl-[protein] + acetyl-CoA = N(6)-biotinyl-L-lysyl-[protein] + malonyl-CoA. It functions in the pathway lipid metabolism; malonyl-CoA biosynthesis; malonyl-CoA from acetyl-CoA: step 1/1. Component of the acetyl coenzyme A carboxylase (ACC) complex. First, biotin carboxylase catalyzes the carboxylation of biotin on its carrier protein (BCCP) and then the CO(2) group is transferred by the carboxyltransferase to acetyl-CoA to form malonyl-CoA. The polypeptide is Acetyl-coenzyme A carboxylase carboxyl transferase subunit alpha (Cupriavidus pinatubonensis (strain JMP 134 / LMG 1197) (Cupriavidus necator (strain JMP 134))).